The primary structure comprises 981 residues: Probable NAD kinase 2, chloroplastic (981 aa).

The tract at residues 319 to 364 (APSAEQVQRFAEIVSDSAKKPIYLHSQEGISRTSAMVSRWKQYVTR) is calmodulin-binding. Disordered regions lie at residues 369–413 (ATQN…DRTM) and 551–601 (TNGK…AERN). Polar residues-rich tracts occupy residues 387–406 (TEQLTNSPGFSSEGSENGTP), 551–563 (TNGKPSNNGASTS), and 581–596 (SDTSNSNGNAPLGSQK).

Belongs to the NAD kinase family.

It localises to the plastid. The protein resides in the chloroplast. The enzyme catalyses NAD(+) + ATP = ADP + NADP(+) + H(+). In terms of biological role, involved in chlorophyll synthesis and chloroplast protection against oxidative damage. In Oryza sativa subsp. japonica (Rice), this protein is Probable NAD kinase 2, chloroplastic.